We begin with the raw amino-acid sequence, 283 residues long: Pantothenate synthetase (283 aa).

26 to 33 (MGNLHEGH) contributes to the ATP binding site. His-33 (proton donor) is an active-site residue. Gln-57 contributes to the (R)-pantoate binding site. Gln-57 provides a ligand contact to beta-alanine. 144–147 (GKKD) is a binding site for ATP. Residue Gln-150 participates in (R)-pantoate binding. Residues Val-173 and 181 to 184 (LSSR) each bind ATP.

The protein belongs to the pantothenate synthetase family. As to quaternary structure, homodimer.

The protein resides in the cytoplasm. It catalyses the reaction (R)-pantoate + beta-alanine + ATP = (R)-pantothenate + AMP + diphosphate + H(+). It participates in cofactor biosynthesis; (R)-pantothenate biosynthesis; (R)-pantothenate from (R)-pantoate and beta-alanine: step 1/1. Functionally, catalyzes the condensation of pantoate with beta-alanine in an ATP-dependent reaction via a pantoyl-adenylate intermediate. This is Pantothenate synthetase from Ralstonia nicotianae (strain ATCC BAA-1114 / GMI1000) (Ralstonia solanacearum).